Reading from the N-terminus, the 377-residue chain is cAMP-dependent protein kinase type II regulatory subunit (377 aa).

The span at 48–69 shows a compositional bias: polar residues; sequence ERPSVSHTDQSTDDQLSVNSQD. Positions 48-78 are disordered; the sequence is ERPSVSHTDQSTDDQLSVNSQDADAEPPVMA. Residues serine 51, serine 58, serine 64, serine 67, and serine 84 each carry the phosphoserine modification. A Pseudophosphorylation motif motif is present at residues 81 to 85; it reads RRKSV. Tyrosine 90 bears the Phosphotyrosine mark. 3',5'-cyclic AMP is bound by residues 124–239, glutamate 189, arginine 198, 242–362, glutamate 311, and arginine 320; these read LFRS…LLNS and MLKA…YESQ.

Belongs to the cAMP-dependent kinase regulatory chain family. In terms of assembly, tetramer, composed of 2 regulatory (R) and 2 catalytic (C) subunits. In the presence of cAMP it dissociates into 2 active monomeric C subunits and an R dimer. Interacts with Akap200. In terms of processing, the pseudophosphorylation site binds to the substrate-binding region of the catalytic chain but is not phosphorylated. The physiological significance of phosphorylations by other kinases is unclear. As to expression, detected in follicle cells, germline-derived cells, germline line stem cells and outer rim of ring canals of nurse cells throughout oogenesis (at protein level).

It is found in the cytoplasm. Its subcellular location is the cell membrane. Functionally, regulatory subunit of the cAMP-dependent protein kinases involved in cAMP signaling in cells. Mediates membrane association by binding to anchoring proteins, such as Akap200. Might play an essential role in the regulation of neuronal activity in the brain. The polypeptide is cAMP-dependent protein kinase type II regulatory subunit (Pka-R2) (Drosophila melanogaster (Fruit fly)).